Reading from the N-terminus, the 393-residue chain is Arginine biosynthesis bifunctional protein ArgJ (393 aa).

Substrate contacts are provided by T145, K171, T182, E265, N388, and S393. T182 serves as the catalytic Nucleophile.

This sequence belongs to the ArgJ family. As to quaternary structure, heterotetramer of two alpha and two beta chains.

The protein resides in the cytoplasm. The enzyme catalyses N(2)-acetyl-L-ornithine + L-glutamate = N-acetyl-L-glutamate + L-ornithine. It carries out the reaction L-glutamate + acetyl-CoA = N-acetyl-L-glutamate + CoA + H(+). It participates in amino-acid biosynthesis; L-arginine biosynthesis; L-ornithine and N-acetyl-L-glutamate from L-glutamate and N(2)-acetyl-L-ornithine (cyclic): step 1/1. Its pathway is amino-acid biosynthesis; L-arginine biosynthesis; N(2)-acetyl-L-ornithine from L-glutamate: step 1/4. Functionally, catalyzes two activities which are involved in the cyclic version of arginine biosynthesis: the synthesis of N-acetylglutamate from glutamate and acetyl-CoA as the acetyl donor, and of ornithine by transacetylation between N(2)-acetylornithine and glutamate. The protein is Arginine biosynthesis bifunctional protein ArgJ of Nitratidesulfovibrio vulgaris (strain ATCC 29579 / DSM 644 / CCUG 34227 / NCIMB 8303 / VKM B-1760 / Hildenborough) (Desulfovibrio vulgaris).